We begin with the raw amino-acid sequence, 117 residues long: Acylphosphatase (117 aa).

Positions 31–117 (RWRWIIQGQV…RGDDWFEVRY (87 aa)) constitute an Acylphosphatase-like domain. Residues Arg46 and Asn64 contribute to the active site.

The protein belongs to the acylphosphatase family.

The enzyme catalyses an acyl phosphate + H2O = a carboxylate + phosphate + H(+). This is Acylphosphatase (acyP) from Synechococcus sp. (strain CC9902).